The following is a 341-amino-acid chain: Tubulin-specific chaperone C (341 aa).

Met-1 carries the post-translational modification N-acetylmethionine. A compositionally biased stretch (basic and acidic residues) spans 34–49; the sequence is ERQIEVERRKQKRQDQ. Positions 34-55 are disordered; it reads ERQIEVERRKQKRQDQEVEEEK. Ser-79 is subject to Phosphoserine. The tract at residues 148–173 is disordered; it reads TAQVDAAPVTSAAPSPPVTKEEEGAP. Residues 163–318 form the C-CAP/cofactor C-like domain; that stretch reads PPVTKEEEGA…NWDQVDDFNW (156 aa).

Belongs to the TBCC family. Supercomplex made of cofactors A to E. Cofactors A and D function by capturing and stabilizing tubulin in a quasi-native conformation. Cofactor E binds to the cofactor D-tubulin complex; interaction with cofactor C then causes the release of tubulin polypeptides that are committed to the native state.

Its subcellular location is the cytoplasm. Functionally, tubulin-folding protein; involved in the final step of the tubulin folding pathway. This Mus musculus (Mouse) protein is Tubulin-specific chaperone C (Tbcc).